Consider the following 203-residue polypeptide: Small ribosomal subunit protein uS4 (203 aa).

The 64-residue stretch at 93–156 (RRLDNVVYRL…AKVPAILEAV (64 aa)) folds into the S4 RNA-binding domain.

This sequence belongs to the universal ribosomal protein uS4 family. As to quaternary structure, part of the 30S ribosomal subunit. Contacts protein S5. The interaction surface between S4 and S5 is involved in control of translational fidelity.

Its function is as follows. One of the primary rRNA binding proteins, it binds directly to 16S rRNA where it nucleates assembly of the body of the 30S subunit. Functionally, with S5 and S12 plays an important role in translational accuracy. This Streptococcus mutans serotype c (strain ATCC 700610 / UA159) protein is Small ribosomal subunit protein uS4.